A 348-amino-acid polypeptide reads, in one-letter code: MIPATYTLSQITARLGGEWRGEDISVTAVRPLADAQAEHISFLANPKYKAEVHDSSAGAVIVSAKAADGFEGRNLIVADDPYLYFAKVARLFSPVVKARGGIHPTAVVEPSATVPASCEIGANAYIGANTVLGEGCRILANAVVQHDCKLGDEVVLHPNAVVYYGCTLGRRVEIHSGAVIGADGFGLAFAGDSWFKIPQTGAVTLGDDVEIGSNTNIDRGAMSDTTVGNGTKIDNQVQIGHNCKIGSHTVIAAKTGISGSVTIGSYCIIGGGVGTVGHIEIADKTTIGGGTSVTHSITESGKHLAGIFPMSTHKEWARNAVYIHRLSEMNKRLKTLEQQLSDAGQDSK.

Histidine 241 functions as the Proton acceptor in the catalytic mechanism.

This sequence belongs to the transferase hexapeptide repeat family. LpxD subfamily. As to quaternary structure, homotrimer.

It carries out the reaction a UDP-3-O-[(3R)-3-hydroxyacyl]-alpha-D-glucosamine + a (3R)-hydroxyacyl-[ACP] = a UDP-2-N,3-O-bis[(3R)-3-hydroxyacyl]-alpha-D-glucosamine + holo-[ACP] + H(+). It functions in the pathway bacterial outer membrane biogenesis; LPS lipid A biosynthesis. Catalyzes the N-acylation of UDP-3-O-acylglucosamine using 3-hydroxyacyl-ACP as the acyl donor. Is involved in the biosynthesis of lipid A, a phosphorylated glycolipid that anchors the lipopolysaccharide to the outer membrane of the cell. The polypeptide is UDP-3-O-acylglucosamine N-acyltransferase (Neisseria meningitidis serogroup C / serotype 2a (strain ATCC 700532 / DSM 15464 / FAM18)).